We begin with the raw amino-acid sequence, 396 residues long: MAVQETAAQLSMALKVQEYPTLKVPYETLNKRFRAAQKNIDRETSHVTMVVAELEKTLSSFPVVDTVVSLLDGVVEKLSALKRKAAESIQAEDESAKLCKRRIEHLKEHSSDQPASVNVWKKKRMDRMMVEHLLRCGYYNTAVKLARQSGIEDLVNIEMFLTAKEVEESLERQETATCLAWCHDNKSRLRKMKSCLEFSLRIQEFIELIRQNKRMDAVRHARKHFSQAEGGQLDEVRQVMGMLAFPSDTHISPYKDLLDPARWKMLIQQFRYDNYRLHQLGNNSVFTITLQAGLSAIKTPQCYKEDGTSKNPDCPVCSKSLNKLAQPLPMAHCANSRLVCKISGEVMNENNPPMMLPNGYVYGYNSLLSIRQDDKVICPRTKEVFNFSQAEKVYIM.

One can recognise a LisH domain in the interval 121-153; sequence KKKRMDRMMVEHLLRCGYYNTAVKLARQSGIED. The 58-residue stretch at 159-216 folds into the CTLH domain; the sequence is MFLTAKEVEESLERQETATCLAWCHDNKSRLRKMKSCLEFSLRIQEFIELIRQNKRMD. An RING-Gid-type zinc finger spans residues 314–381; it reads CPVCSKSLNK…QDDKVICPRT (68 aa).

Identified in the CTLH complex that contains at least MAEA, RMND5A, GID8, WDR26, and RANBP9 and/or RANBP10 as the catalytic core. Interacts with F-actin.

The protein resides in the nucleus matrix. Its subcellular location is the cell membrane. The protein localises to the cytoplasm. It is found in the cytoskeleton. The catalysed reaction is S-ubiquitinyl-[E2 ubiquitin-conjugating enzyme]-L-cysteine + [acceptor protein]-L-lysine = [E2 ubiquitin-conjugating enzyme]-L-cysteine + N(6)-ubiquitinyl-[acceptor protein]-L-lysine.. Its function is as follows. Core component of the CTLH E3 ubiquitin-protein ligase complex that selectively accepts ubiquitin from UBE2H and mediates ubiquitination and subsequent proteasomal degradation of the transcription factor HBP1. MAEA and RMND5A are both required for catalytic activity of the CTLH E3 ubiquitin-protein ligase complex. MAEA is required for normal cell proliferation. The CTLH E3 ubiquitin-protein ligase complex is not required for the degradation of enzymes involved in gluconeogenesis, such as FBP1. Plays a role in erythroblast maturation and in the development of mature macrophages. Mediates the attachment of erythroid cell to mature macrophages; this MAEA-mediated contact inhibits erythroid cell apoptosis. Participates in erythroblastic island formation, which is the functional unit of definitive erythropoiesis. Associates with F-actin to regulate actin distribution in erythroblasts and macrophages. May contribute to nuclear architecture and cells division events. The chain is E3 ubiquitin-protein transferase MAEA (maea) from Danio rerio (Zebrafish).